Consider the following 214-residue polypeptide: Ribonuclease T (214 aa).

Positions 20-195 (VVVDVETAGF…YDTQQTAELF (176 aa)) constitute an Exonuclease domain. Residues Asp23, Glu25, His182, and Asp187 each contribute to the Mg(2+) site. Catalysis depends on His182, which acts as the Proton donor/acceptor.

This sequence belongs to the RNase T family. As to quaternary structure, homodimer. It depends on Mg(2+) as a cofactor.

Functionally, trims short 3' overhangs of a variety of RNA species, leaving a one or two nucleotide 3' overhang. Responsible for the end-turnover of tRNA: specifically removes the terminal AMP residue from uncharged tRNA (tRNA-C-C-A). Also appears to be involved in tRNA biosynthesis. In Vibrio campbellii (strain ATCC BAA-1116), this protein is Ribonuclease T.